A 912-amino-acid chain; its full sequence is Bifunctional uridylyltransferase/uridylyl-removing enzyme (912 aa).

A uridylyltransferase region spans residues 1 to 369 (MLPRIANQRA…FFASLRSRRK (369 aa)). Residues 370-722 (KVGPFFIEGG…AHWYPARGAT (353 aa)) are uridylyl-removing. Residues 486 to 608 (VDEHTIRAIG…VQSQERLRLL (123 aa)) form the HD domain. ACT domains lie at 723-802 (LVTV…LVPQ) and 834-912 (VIEV…KDAA).

This sequence belongs to the GlnD family. Mg(2+) serves as cofactor.

The enzyme catalyses [protein-PII]-L-tyrosine + UTP = [protein-PII]-uridylyl-L-tyrosine + diphosphate. It catalyses the reaction [protein-PII]-uridylyl-L-tyrosine + H2O = [protein-PII]-L-tyrosine + UMP + H(+). Its activity is regulated as follows. Uridylyltransferase (UTase) activity is inhibited by glutamine, while glutamine activates uridylyl-removing (UR) activity. Its function is as follows. Modifies, by uridylylation and deuridylylation, the PII regulatory proteins (GlnB and homologs), in response to the nitrogen status of the cell that GlnD senses through the glutamine level. Under low glutamine levels, catalyzes the conversion of the PII proteins and UTP to PII-UMP and PPi, while under higher glutamine levels, GlnD hydrolyzes PII-UMP to PII and UMP (deuridylylation). Thus, controls uridylylation state and activity of the PII proteins, and plays an important role in the regulation of nitrogen assimilation and metabolism. The chain is Bifunctional uridylyltransferase/uridylyl-removing enzyme from Novosphingobium aromaticivorans (strain ATCC 700278 / DSM 12444 / CCUG 56034 / CIP 105152 / NBRC 16084 / F199).